Reading from the N-terminus, the 1162-residue chain is Leptin receptor (1162 aa).

Residues 1–21 (MTCQKFYVVLLHWEFLYVITA) form the signal peptide. At 22–839 (LNLAYPTSPW…DIAKQQNDAG (818 aa)) the chain is on the extracellular side. 5 disulfides stabilise this stretch: cysteine 37–cysteine 90, cysteine 89–cysteine 99, cysteine 131–cysteine 142, cysteine 186–cysteine 195, and cysteine 188–cysteine 193. 4 N-linked (GlcNAc...) asparagine glycosylation sites follow: asparagine 55, asparagine 56, asparagine 73, and asparagine 98. Asparagine 187 is a glycosylation site (N-linked (GlcNAc...) asparagine). Residues 238 to 331 (PPLGLRMEVT…LPQLFTTQDV (94 aa)) form the Fibronectin type-III 1 domain. Asparagine 275, asparagine 345, and asparagine 356 each carry an N-linked (GlcNAc...) asparagine glycan. Cystine bridges form between cysteine 350/cysteine 410 and cysteine 411/cysteine 416. An N-linked (GlcNAc...) asparagine glycan is attached at asparagine 431. 3 cysteine pairs are disulfide-bonded: cysteine 434–cysteine 445, cysteine 471–cysteine 526, and cysteine 486–cysteine 496. The leptin-binding stretch occupies residues 465–482 (HRRSLYCPDNPSIRPTSE). N-linked (GlcNAc...) asparagine glycosylation is found at asparagine 514, asparagine 622, asparagine 657, asparagine 668, asparagine 686, asparagine 695, asparagine 698, and asparagine 726. 3 Fibronectin type-III domains span residues 537-632 (PPSN…TLVM), 637-729 (PMRG…NLTF), and 738-831 (AVQS…KDDI). The WSXWS motif motif lies at 620 to 624 (WSNWS). A helical transmembrane segment spans residues 840 to 860 (LYVIVPIIISSCVLLLGTLLI). Topologically, residues 861–1162 (SHQRMKKLFW…IENKMCDLTV (302 aa)) are cytoplasmic. Residues 869–877 (FWDDVPNPK) carry the Box 1 motif motif. Residue serine 880 is modified to Phosphoserine. Positions 891–896 (ETFEHL) are required for JAK2 activation. A required for STAT3 phosphorylation region spans residues 896-904 (LFTKHAESV). Tyrosine 985 is subject to Phosphotyrosine; by JAK2. Tyrosine 1077 carries the phosphotyrosine modification. Tyrosine 1138 is subject to Phosphotyrosine; by JAK2.

Belongs to the type I cytokine receptor family. Type 2 subfamily. In terms of assembly, present as a mixture of monomers and dimers. The phosphorylated receptor binds a number of SH2 domain-containing proteins such as JAK2, STAT3, PTPN11, and SOCS3. Interaction with SOCS3 inhibits JAK/STAT signaling and MAPK cascade. Post-translationally, on ligand binding, phosphorylated on two conserved C-terminal tyrosine residues (isoform B only) by JAK2. Tyr-985 is required for complete binding and activation of PTPN11, ERK/FOS activation,for interaction with SOCS3 and SOCS3 mediated inhibition of leptin signaling. Phosphorylation on Tyr-1138 is required for STAT3 binding/activation. Phosphorylation of Tyr-1077 has a more accessory role. In terms of tissue distribution, isoform B is expressed in kidney, liver, lung, ovary, spleen and uterus. Increased level in uterus during gestation. Isoform A and isoform C are predominantly expressed in cerebral microvessels and choroid plexus, with lower levels in cortex, cerebellum and hypothalamus but also liver and lung. Isoform F is expressed at high levels in brain, liver and spleen and less in stomach, kidney, thymus, heart, lung and hypothalamus.

It localises to the cell membrane. The protein resides in the basolateral cell membrane. The protein localises to the secreted. In terms of biological role, receptor for hormone LEP/leptin. On ligand binding, mediates LEP central and peripheral effects through the activation of different signaling pathways such as JAK2/STAT3 and MAPK cascade/FOS. In the hypothalamus, LEP acts as an appetite-regulating factor that induces a decrease in food intake and an increase in energy consumption by inducing anorexinogenic factors and suppressing orexigenic neuropeptides, also regulates bone mass and secretion of hypothalamo-pituitary-adrenal hormones. In the periphery, increases basal metabolism, influences reproductive function, regulates pancreatic beta-cell function and insulin secretion, is pro-angiogenic and affects innate and adaptive immunity. Control of energy homeostasis and melanocortin production (stimulation of POMC and full repression of AgRP transcription) is mediated by STAT3 signaling, whereas distinct signals regulate NPY and the control of fertility, growth and glucose homeostasis. Involved in the regulation of counter-regulatory response to hypoglycemia by inhibiting neurons of the parabrachial nucleus. Has a specific effect on T lymphocyte responses, differentially regulating the proliferation of naive and memory T-cells. Leptin increases Th1 and suppresses Th2 cytokine production. May transport LEP across the blood-brain barrier. Binds LEP and mediates LEP endocytosis. Does not induce phosphorylation of and activate STAT3. Its function is as follows. Antagonizes Isoform A and isoform B-mediated LEP binding and endocytosis. The polypeptide is Leptin receptor (Lepr) (Rattus norvegicus (Rat)).